A 462-amino-acid chain; its full sequence is Argininosuccinate lyase (462 aa).

It belongs to the lyase 1 family. Argininosuccinate lyase subfamily.

Its subcellular location is the cytoplasm. The catalysed reaction is 2-(N(omega)-L-arginino)succinate = fumarate + L-arginine. It functions in the pathway amino-acid biosynthesis; L-arginine biosynthesis; L-arginine from L-ornithine and carbamoyl phosphate: step 3/3. The sequence is that of Argininosuccinate lyase from Bacillus cereus (strain ATCC 10987 / NRS 248).